The following is a 250-amino-acid chain: Pyrroloquinoline-quinone synthase (250 aa).

It belongs to the PqqC family.

It carries out the reaction 6-(2-amino-2-carboxyethyl)-7,8-dioxo-1,2,3,4,7,8-hexahydroquinoline-2,4-dicarboxylate + 3 O2 = pyrroloquinoline quinone + 2 H2O2 + 2 H2O + H(+). It participates in cofactor biosynthesis; pyrroloquinoline quinone biosynthesis. Ring cyclization and eight-electron oxidation of 3a-(2-amino-2-carboxyethyl)-4,5-dioxo-4,5,6,7,8,9-hexahydroquinoline-7,9-dicarboxylic-acid to PQQ. The polypeptide is Pyrroloquinoline-quinone synthase (Xanthomonas oryzae pv. oryzae (strain PXO99A)).